Here is a 202-residue protein sequence, read N- to C-terminus: MSERIASVERTTSETHISCTIDLDHIPGVTEQKINVSTGIGFLDHMFTALAKHGGMSLQLQCKGDLHIDDHHTAEDCALALGEAFKKALGERKGIKRYGYAYAPLDESLSRAVIDISSRPYFMCHLPFTREKVGDLSTEMVSHLLQSFAFAAGVTLHIDSIRGENNHHIAESAFKALALAIRMAISRTGGDDVPSTKGVLAL.

The protein belongs to the imidazoleglycerol-phosphate dehydratase family. Homotrimer.

It catalyses the reaction D-erythro-1-(imidazol-4-yl)glycerol 3-phosphate = 3-(imidazol-4-yl)-2-oxopropyl phosphate + H2O. The protein operates within amino-acid biosynthesis; L-histidine biosynthesis; L-histidine from 5-phospho-alpha-D-ribose 1-diphosphate: step 6/9. The protein is Imidazoleglycerol-phosphate dehydratase (HIS3) of Cryptococcus neoformans var. neoformans serotype D (strain B-3501A) (Filobasidiella neoformans).